The sequence spans 788 residues: Diacylglycerol kinase gamma (788 aa).

Positions 83 to 93 (PRQETPDHPKE) are enriched in basic and acidic residues. A disordered region spans residues 83 to 150 (PRQETPDHPK…WGEPNAPASS (68 aa)). Polar residues predominate over residues 95–109 (ASSSEPNVSDSNAES). 2 consecutive EF-hand domains span residues 172–207 (RPQD…MLHV) and 217–252 (ELRP…TIPL). Asp-185, Asp-187, Asn-189, Glu-196, Asp-230, Asn-232, Asp-234, and Glu-241 together coordinate Ca(2+). 2 consecutive Phorbol-ester/DAG-type zinc fingers follow at residues 268–318 (RHAW…IPGC) and 333–380 (QHAW…STAC). A DAGKc domain is found at 427–561 (PGTHPLLVLV…LDRWYLEVMP (135 aa)). Positions 768–788 (MMGPPQKSSFFSLRRKSRSKD) are disordered.

Belongs to the eukaryotic diacylglycerol kinase family. As to expression, expressed specifically in brain. Highly expressed in cerebellar Purkinje cells (at protein level).

Its subcellular location is the membrane. It localises to the cytoplasm. It is found in the cytosol. The protein localises to the cytoskeleton. It carries out the reaction a 1,2-diacyl-sn-glycerol + ATP = a 1,2-diacyl-sn-glycero-3-phosphate + ADP + H(+). The enzyme catalyses 1,2-didecanoyl-sn-glycerol + ATP = 1,2-didecanoyl-sn-glycero-3-phosphate + ADP + H(+). The catalysed reaction is 1,2-di-(9Z-octadecenoyl)-sn-glycerol + ATP = 1,2-di-(9Z-octadecenoyl)-sn-glycero-3-phosphate + ADP + H(+). It catalyses the reaction 1-octadecanoyl-2-(9Z,12Z)-octadecadienoyl-sn-glycerol + ATP = 1-octadecanoyl-2-(9Z,12Z-octadecadienoyl)-sn-glycero-3-phosphate + ADP + H(+). It carries out the reaction 1-octadecanoyl-2-(5Z,8Z,11Z,14Z-eicosatetraenoyl)-sn-glycerol + ATP = 1-octadecanoyl-2-(5Z,8Z,11Z,14Z-eicosatetraenoyl)-sn-glycero-3-phosphate + ADP + H(+). The protein operates within lipid metabolism; glycerolipid metabolism. Its activity is regulated as follows. The activity is calcium-dependent. Requires phosphatidylserine for maximal activity. Functionally, diacylglycerol kinase that converts diacylglycerol/DAG into phosphatidic acid/phosphatidate/PA and regulates the respective levels of these two bioactive lipids. Thereby, acts as a central switch between the signaling pathways activated by these second messengers with different cellular targets and opposite effects in numerous biological processes. Has no apparent specificity with regard to the acyl compositions of diacylglycerol. Specifically expressed in the cerebellum where it controls the level of diacylglycerol which in turn regulates the activity of protein kinase C gamma. Through protein kinase C gamma, indirectly regulates the dendritic development of Purkinje cells, cerebellar long term depression and ultimately cerebellar motor coordination. The protein is Diacylglycerol kinase gamma (Dgkg) of Rattus norvegicus (Rat).